Consider the following 251-residue polypeptide: Segregation and condensation protein A (251 aa).

It belongs to the ScpA family. In terms of assembly, component of a cohesin-like complex composed of ScpA, ScpB and the Smc homodimer, in which ScpA and ScpB bind to the head domain of Smc. The presence of the three proteins is required for the association of the complex with DNA.

The protein resides in the cytoplasm. In terms of biological role, participates in chromosomal partition during cell division. May act via the formation of a condensin-like complex containing Smc and ScpB that pull DNA away from mid-cell into both cell halves. The chain is Segregation and condensation protein A from Bacillus licheniformis (strain ATCC 14580 / DSM 13 / JCM 2505 / CCUG 7422 / NBRC 12200 / NCIMB 9375 / NCTC 10341 / NRRL NRS-1264 / Gibson 46).